Here is a 296-residue protein sequence, read N- to C-terminus: Ribosomal protein L11 methyltransferase (296 aa).

Residues Thr-151, Gly-172, Asp-194, and Asn-233 each contribute to the S-adenosyl-L-methionine site.

Belongs to the methyltransferase superfamily. PrmA family.

It is found in the cytoplasm. The enzyme catalyses L-lysyl-[protein] + 3 S-adenosyl-L-methionine = N(6),N(6),N(6)-trimethyl-L-lysyl-[protein] + 3 S-adenosyl-L-homocysteine + 3 H(+). Its function is as follows. Methylates ribosomal protein L11. The protein is Ribosomal protein L11 methyltransferase of Thiobacillus denitrificans (strain ATCC 25259 / T1).